A 126-amino-acid polypeptide reads, in one-letter code: Large ribosomal subunit protein bL19 (126 aa).

The protein belongs to the bacterial ribosomal protein bL19 family.

Its function is as follows. This protein is located at the 30S-50S ribosomal subunit interface and may play a role in the structure and function of the aminoacyl-tRNA binding site. The protein is Large ribosomal subunit protein bL19 of Thiobacillus denitrificans (strain ATCC 25259 / T1).